We begin with the raw amino-acid sequence, 20 residues long: Protein PR-L1 (20 aa).

Belongs to the BetVI family.

This chain is Protein PR-L1, found in Lupinus luteus (European yellow lupine).